The sequence spans 607 residues: Rap1 GTPase-GDP dissociation stimulator 1 (607 aa).

Residues 4–13 carry the Nuclear export signal (NES) motif; the sequence is LSDTLKKLKI. 2 ARM repeats span residues 89–131 and 170–211; these read GLIS…DQAG and DSLQ…NLAE. The tract at residues 122–170 is prevents binding to prenylated RHOA; sequence EGRSAVDQAGGAQIVIDHLRSLCSITDPANEKLLTVFCGMLMNYSNEND. Position 230 is an N6-acetyllysine (Lys-230). Positions 239–255 are interacts with polybasic regions in GTPases; that stretch reads DKREMIFEVLAPLAEND. ARM repeat units follow at residues 347–390, 391–431, and 479–519; these read DANC…NLAI, PVIN…MLID, and SKDV…LIAA. A critical for catalytic activity region spans residues 379–428; the sequence is HAALSALRNLAIPVINKAKMLSAGVTEAVLKFLKSEMPPVQFKLLGTLRM.

In terms of assembly, interacts with RABL3. Interacts with RHOT1. Interacts with unprenylated RHOA; the interaction is direct. Interacts with RAP1A. Interacts with KRAS. Interacts with RAC1. Interacts with RAP1B. Preferentially interacts with unprenylated GTPases that will become geranylgeranylated. May also interact with prenylated GTPases. As to quaternary structure, interacts with prenylated RHOA; the interaction is direct and in a 1:1 stoichiometry. Interacts with RAP1A. Interacts with KRAS. Interacts with RAC1. Interacts with RAP1B. Preferentially interacts with prenylated GTPases. Forms covalent cross-links mediated by transglutaminase TGM2, between a glutamine and the epsilon-amino group of a lysine residue, forming homopolymers and heteropolymers.

The protein localises to the cytoplasm. It is found in the cytosol. The protein resides in the endoplasmic reticulum. It localises to the mitochondrion. Its subcellular location is the nucleus. Functionally, acts as a GEF (guanine nucleotide exchange factor) for the Rho family of small GTP-binding proteins (G proteins) that stimulates the dissociation of GDP to enable subsequent binding of GTP. Additionally, appears to chaperone the processing and/or trafficking of small GTPases containing a C-terminal polybasic region independently of GEF activity. Targets include RAP1A/RAP1B, RHOA, RHOB, RHOC, RAC1 and KRAS. Regulates mitochondrial dynamics by controlling RHOT function to promote mitochondrial fission during high calcium conditions. Able to promote the Ca(2+) release from the endoplasmic reticulum via both inositol trisphosphate (Ins3P) and ryanodine sensitive receptors leading to a enhanced mitochondrial Ca(2+) uptake. Its function is as follows. Acts as a GEF (guanine nucleotide exchange factor) for unprenylated RHOA. Chaperones the entry and passage of small GTPases through the prenylation pathway. Recognizes the last amino acid in the GTPase C-terminal CAAX motif with a preference for 'Leu' over 'Met', indicating involvement in the geranylgeranylation pathway. Acts as a GEF (guanine nucleotide exchange factor) for prenylated RHOA. Acts as a GEF for RHOC. Chaperones the downstream trafficking and/or processing of small newly prenylated GTPases. Escorts RAC1 to the nucleus. The sequence is that of Rap1 GTPase-GDP dissociation stimulator 1 from Homo sapiens (Human).